A 140-amino-acid chain; its full sequence is Histone H2B (140 aa).

The segment covering 1–10 (MPPKAAEKKP) has biased composition (basic and acidic residues). The tract at residues 1–48 (MPPKAAEKKPTTGGKAPAGKAPAEKKEAGKKTAAAASGDKKKRGKTRK) is disordered. 2 positions are modified to N6-acetyllysine; alternate: Lys8 and Lys9. Residues Lys8 and Lys9 each participate in a glycyl lysine isopeptide (Lys-Gly) (interchain with G-Cter in SUMO); alternate cross-link. Residues 11 to 21 (TTGGKAPAGKA) show a composition bias toward low complexity. Lys15 bears the N6-acetyllysine mark. Lys25 carries the N6-acetyllysine; alternate modification. Residue Lys25 forms a Glycyl lysine isopeptide (Lys-Gly) (interchain with G-Cter in SUMO); alternate linkage. Lys26 participates in a covalent cross-link: Glycyl lysine isopeptide (Lys-Gly) (interchain with G-Cter in SUMO). Residue Lys134 forms a Glycyl lysine isopeptide (Lys-Gly) (interchain with G-Cter in ubiquitin) linkage.

Belongs to the histone H2B family. As to quaternary structure, the nucleosome is a histone octamer containing two molecules each of H2A, H2B, H3 and H4 assembled in one H3-H4 heterotetramer and two H2A-H2B heterodimers. The octamer wraps approximately 147 bp of DNA. In terms of processing, monoubiquitinated by the ubc2-bre1 complex to form H2BK123ub1. H2BK123ub1 gives a specific tag for epigenetic transcriptional activation and is also prerequisite for H3K4me and H3K79me formation. H2BK123ub1 also modulates the formation of double-strand breaks during meiosis and is a prerequisite for DNA-damage checkpoint activation. Acetylated by gcn5 to form H2BK11ac and H2BK16ac. H2BK16ac can also be formed by esa1. Acetylation of N-terminal lysines and particularly formation of H2BK11acK16ac has a positive effect on transcription. Post-translationally, sumoylation to form H2BK6su or H2BK7su, and probably also H2BK16su or H2BK17su, occurs preferentially near the telomeres and represses gene transcription.

Its subcellular location is the nucleus. It is found in the chromosome. Functionally, core component of nucleosome. Nucleosomes wrap and compact DNA into chromatin, limiting DNA accessibility to the cellular machineries which require DNA as a template. Histones thereby play a central role in transcription regulation, DNA repair, DNA replication and chromosomal stability. DNA accessibility is regulated via a complex set of post-translational modifications of histones, also called histone code, and nucleosome remodeling. In Aspergillus terreus (strain NIH 2624 / FGSC A1156), this protein is Histone H2B (htb1).